The primary structure comprises 637 residues: Poly(A) polymerase beta (637 aa).

Residues 1-10 (MMPFPVTTQG) are compositionally biased toward low complexity. A disordered region spans residues 1 to 23 (MMPFPVTTQGPPQPAPPPNRYGV). Residues 101 to 103 (FGS), Thr110, 114 to 116 (DID), Asp168, Lys229, Tyr238, and 247 to 248 (GV) each bind ATP. Residues Asp114, Asp116, and Asp168 each coordinate Mg(2+). A disordered region spans residues 535 to 555 (SVPSSTSTMKTGPLISSSQGR).

This sequence belongs to the poly(A) polymerase family. In terms of assembly, interacts with GSG1. It depends on Mg(2+) as a cofactor. Mn(2+) serves as cofactor. In terms of tissue distribution, testis specific.

The protein resides in the nucleus. It catalyses the reaction RNA(n) + ATP = RNA(n)-3'-adenine ribonucleotide + diphosphate. This is Poly(A) polymerase beta from Homo sapiens (Human).